The primary structure comprises 449 residues: Putative glycosyltransferase 7 (449 aa).

At Met1–Asp32 the chain is on the cytoplasmic side. Residues Val33 to Phe53 traverse the membrane as a helical; Signal-anchor for type II membrane protein segment. At Ser54–Trp449 the chain is on the lumenal side. Asn59, Asn123, and Asn332 each carry an N-linked (GlcNAc...) asparagine glycan.

It belongs to the glycosyltransferase 34 family.

Its subcellular location is the golgi apparatus membrane. Its function is as follows. Probable glycosyltransferase that may be involved in the biosynthesis of xyloglucan. The protein is Putative glycosyltransferase 7 (GT7) of Arabidopsis thaliana (Mouse-ear cress).